The primary structure comprises 381 residues: Succinyl-diaminopimelate desuccinylase 1 (381 aa).

Position 70 (His70) interacts with Zn(2+). The active site involves Asp72. Asp103 is a binding site for Zn(2+). Glu136 serves as the catalytic Proton acceptor. Glu137, Glu165, and His354 together coordinate Zn(2+).

This sequence belongs to the peptidase M20A family. DapE subfamily. As to quaternary structure, homodimer. Requires Zn(2+) as cofactor. Co(2+) serves as cofactor.

It carries out the reaction N-succinyl-(2S,6S)-2,6-diaminopimelate + H2O = (2S,6S)-2,6-diaminopimelate + succinate. It functions in the pathway amino-acid biosynthesis; L-lysine biosynthesis via DAP pathway; LL-2,6-diaminopimelate from (S)-tetrahydrodipicolinate (succinylase route): step 3/3. In terms of biological role, catalyzes the hydrolysis of N-succinyl-L,L-diaminopimelic acid (SDAP), forming succinate and LL-2,6-diaminopimelate (DAP), an intermediate involved in the bacterial biosynthesis of lysine and meso-diaminopimelic acid, an essential component of bacterial cell walls. The chain is Succinyl-diaminopimelate desuccinylase 1 from Ruegeria sp. (strain TM1040) (Silicibacter sp.).